Reading from the N-terminus, the 81-residue chain is Putative chemokine-related protein B42 (81 aa).

3 disulfide bridges follow: Cys-7–Cys-73, Cys-8–Cys-29, and Cys-11–Cys-45.

In terms of tissue distribution, expressed in placenta, heart, lung, liver, pancreas, skeletal muscle and brain.

Its subcellular location is the cytoplasm. The polypeptide is Putative chemokine-related protein B42 (Homo sapiens (Human)).